Here is a 232-residue protein sequence, read N- to C-terminus: Ribose-5-phosphate isomerase A (232 aa).

Residues 29–32 (TGST), 84–87 (DGAD), and 97–100 (KGGG) contribute to the substrate site. The active-site Proton acceptor is the E106. K124 provides a ligand contact to substrate.

The protein belongs to the ribose 5-phosphate isomerase family. In terms of assembly, homodimer.

It catalyses the reaction aldehydo-D-ribose 5-phosphate = D-ribulose 5-phosphate. It participates in carbohydrate degradation; pentose phosphate pathway; D-ribose 5-phosphate from D-ribulose 5-phosphate (non-oxidative stage): step 1/1. In terms of biological role, catalyzes the reversible conversion of ribose-5-phosphate to ribulose 5-phosphate. The sequence is that of Ribose-5-phosphate isomerase A from Brucella suis biovar 1 (strain 1330).